The primary structure comprises 335 residues: Dipeptide transport ATP-binding protein DppD (335 aa).

In terms of domain architecture, ABC transporter spans 7-256 (VQNLHVSFTT…PQHPYTKGLL (250 aa)). 41–48 (GESGCGKS) is an ATP binding site.

The protein belongs to the ABC transporter superfamily.

The protein resides in the cell membrane. The catalysed reaction is a dipeptide(out) + ATP + H2O = a dipeptide(in) + ADP + phosphate + H(+). Functionally, probably part of the ABC transporter DppBCDE involved in dipeptide transport. Responsible for energy coupling to the transport system. The protein is Dipeptide transport ATP-binding protein DppD (dppD) of Bacillus subtilis (strain 168).